Reading from the N-terminus, the 2393-residue chain is MDLSSGGPSSSSDVASELDNSDAMQLVRQAVLFENVELLADLFKVNPWVWNRVDRHGRTPLMLAAHNGKLDSLRTILMLSPNSLNLVNDRGKTALHMAAESGETSIVLELVELGSDPMKSDNEGHCALELAQMAGHNEVAAKLIDAIQKESEDLNEAHTMIISACISGSADVVYEISRRFMEKKQSREILFNGRNEEDETALLIACTNGHIEIVRHLLQFEEHLLQSHVSKDTVIHAAVSSQNVEVLQLCLEKFPQLVKSTNNEGSTCLHWAARCGSSECVSTILNFPFPSEFIIEIDTVGAPAYQLALDVNEVDGECRTAMYLAVAEGHLEVVKAMTDFKCTSIDGRQRCPFQLDVYCTRGRTPFMLAAFNQNLPLMTLLLDAGADVNLPLAVLDTEYSVEEGRCIGSGALVEAVRSDGLHIVHFLLDRGALDTDNKALRLAAQGKNEKLIRVFLVRLVFADPEYKINKKNIDVGQIQVGQSLLPSSLCPSKAAQLNWNSANLEQLQSDWFVAAALHVNPRLRTTRLSLAAITRVDLSDNRLNTFPSILFQMPSLRSLNLADNSIRKIEIPTYYISSTSLEILNLRNNQLECIAIQFLSSLPQLQQLDVSKNELSQLPEYIWLCPALKELNASYNRLSTLPMVARASRGERPRLNNSNNNFNTQSPTQESNPIVVDDPPNVTSNPLRRQNVWQASINLSKVDDDSLFPDFPVTSSNTLTTINLSFNKFHTFPFCLACTCPRLLILNMSNNSMTSLPPMACVPAHLRTLDLSYNKIQESFIEASPLHVVCHAVPPTTSNGSMLPKRRNSPARQHRSRSKSAVRSQRSLSVSRHHALIDPQKEEESCVHKRHDSLEWLKTLQLAGNRLRSISVTNAASKVLLPALNVMDISDNKLLQAPPDVARLTLLSMLNLSGNTAIKELPPDYGMLSRLWSLSLKGCSLKEPLESMVNVENCKTVEIVAYLKTILEESKTYHHLRLMILGSDGVGKSVIWDALCKEAVQKRQPIHSETGVIRQAEWKFEAKRSKGDKNLGPVGFSVIDFGGQREYHSTHQYFLSKRSLNLVLWKITDGDEALAQLDTWLVNIHARAPNSTVILVGTNLDQVASNSSKFGPGYIDIMEQKVRTRYMVADADKSGLPRIVDVILINSTSRNDVKALLNTIYRTAWEVRMGKERAMEQQIPSSYIALMKVTKELGVEFRKEGQPAVMTVEAYRERVKKRMISKFGRPFRDDIEFYAACTFLHDCGELVRFEDATLRDLIFVDPLWLAEFLTSVVILRSPNLPAGLLSTDAINPHTRSFKSGALLMLKTQLLDLLHKFELALATQPRQLLIPSLLPDEYRLRSDFLASAVKIRMKMSQWNVRCPSPAGSPTKSPLRRTSPTDQNGVGSEDVMLQFTYDDDQLLRRIYALAYIPSGFWSRLVTRIVGDKNVCAAIESIFMTTSADRAKIADIATKHAKAEWVVWQTGIELHVKGHSLFTLKQFLPLAEVRDIDYSAIDMRAKDEQKRWRTWNQPSHRPIVEMVVNSLSISAASQHGRKLSMKTDVEGRSRLLAMISDLLDTLLEDWYPALGTRFVHSSEGDLLVSRYVLCPQCVRDAERNGSRSRTSSSASHRRSQDDGELPITSSSHMKGSRTTGDISKCRGGVVHCFVIEECMLAGREYNWVECPSHGGLHMRELAPDTVFADIENALTIHPDQLKRSRMLGRGAFGFVFRATVRQPNGELCEVAQKMLEPVDPGPGGRPSALAAYKAAADKWKRDSMEFACRAYCTSRQELSLLSRMKHPNVIGLVGVCTFPLSLVVELAPLGALNQLLGSHRKAGTKLSLGVIKESAVQVARALEYLHSAHIIYRDLKSENVLGWRFPAPFSPQTDVLLKLGDYGISRSVLPSGGAKGFGGTEGFMAPEIVRFNGEEEYTQKVDCFSFGMFLYELLTLKFPFESEEHVKERMLDGARPVLLPHELLLPTPMLDLLVHCWSAHPESRPSSSQLVGFCAAPEFTHLLDVCELGEALPPTQLMAVGITDEIDDPDDFEAQLWLSGREMVVMGCTQYGFVDQKSIELPHRGKYVSKVRDSVWSCDECGQVTVYGISLHETGHLQLPSLNGTLICAPELISNDVLILISDKQIVLLKLSESNSVSHLGTIDSPYEIRTATFLGNGSTRQIWAGHSEGRISIHHIASNDSFSFSSSLYLPDDKCIVRQLVGSKDAQKVWIALEKSSKVQMVEVEKRQVTGSLDIRKVMPGSETIHTIDMEMASQNYVTCIGLLERNDGDQLYIGTSKGLLVIAHATTLQPLSACRPFEGDITSICILEEPSREEENTRGKATTLSTASSESGLGWVRERVSETVDRFRSSPATVETQGAALVVCIGRQFRSLSHRFVAEEKLADVYSIAVWRTEEWAL.

10 ANK repeats span residues 56–86 (HGRT…SLNL), 90–120 (RGKT…PMKS), 123–152 (EGHC…KESE), 197–226 (EDET…HLLQ), 230–259 (SKDT…QLVK), 264–293 (EGST…PSEF), 317–347 (ECRT…SIDG), 361–390 (RGRT…DVNL), 407–437 (IGSG…DTDN), and 439–464 (ALRL…FADP). 5 LRR repeats span residues 532–553 (AITR…LFQM), 555–576 (SLRS…TYYI), 580–600 (SLEI…QFLS), 604–625 (QLQQ…IWLC), and 627–648 (ALKE…ARAS). Residues 649-675 (RGERPRLNNSNNNFNTQSPTQESNPIV) are disordered. LRR repeat units follow at residues 718–739 (TLTT…LACT), 742–763 (RLLI…ACVP), and 765–787 (HLRT…SPLH). The interval 797-844 (TSNGSMLPKRRNSPARQHRSRSKSAVRSQRSLSVSRHHALIDPQKEEE) is disordered. Basic residues predominate over residues 804–820 (PKRRNSPARQHRSRSKS). Positions 821 to 830 (AVRSQRSLSV) are enriched in polar residues. Residues 835–844 (ALIDPQKEEE) show a composition bias toward basic and acidic residues. LRR repeat units lie at residues 856–877 (WLKT…NAAS), 883–905 (ALNV…ARLT), 906–928 (LLSM…YGML), and 930–952 (RLWS…VNVE). The region spanning 969–1167 (ESKTYHHLRL…NTIYRTAWEV (199 aa)) is the Roc domain. GTP contacts are provided by residues 982–989 (GSDGVGKS), 1040–1044 (DFGGQ), and 1098–1101 (TNLD). The COR domain maps to 1233–1422 (FYAACTFLHD…GFWSRLVTRI (190 aa)). 2 disordered regions span residues 1361-1382 (CPSP…TDQN) and 1596-1633 (RNGS…RTTG). Polar residues-rich tracts occupy residues 1366–1382 (GSPT…TDQN) and 1620–1633 (ITSS…RTTG). The Protein kinase domain maps to 1694–1992 (LKRSRMLGRG…LVGFCAAPEF (299 aa)). ATP contacts are provided by residues 1700-1708 (LGRGAFGFV) and Lys-1726. The Proton acceptor role is filled by Asp-1847.

This sequence belongs to the protein kinase superfamily. TKL Ser/Thr protein kinase family. ROCO subfamily. Mg(2+) is required as a cofactor. The cofactor is Mn(2+). Expressed in cell bodies, but not in dendritic or axonal processes, of adult head neurons. Also present in non-neuronal tissues, such as the body wall musculature and the epithelial cells of the nematode vulva.

The protein localises to the golgi apparatus. It catalyses the reaction L-seryl-[protein] + ATP = O-phospho-L-seryl-[protein] + ADP + H(+). It carries out the reaction L-threonyl-[protein] + ATP = O-phospho-L-threonyl-[protein] + ADP + H(+). Functionally, determines polarized sorting of synaptic vesicle (SV) proteins to the axons by excluding SV proteins from the dendrite-specific transport machinery in the Golgi. Role in stress response. Appears to antagonize the effects of pink-1 both in the regulation of axon guidance and stress response. This chain is Leucine-rich repeat serine/threonine-protein kinase 1 (lrk-1), found in Caenorhabditis elegans.